The primary structure comprises 455 residues: Zinc finger and BTB domain-containing protein 8A.2 (455 aa).

One can recognise a BTB domain in the interval 24 to 92 (CDCHIMIDGH…MYSGKLNLSG (69 aa)). C2H2-type zinc fingers lie at residues 299–321 (FKCP…LLCH) and 327–350 (YPCQ…RTIH).

The protein localises to the nucleus. May be involved in transcriptional regulation. This is Zinc finger and BTB domain-containing protein 8A.2 (zbtb8a.2) from Xenopus tropicalis (Western clawed frog).